The sequence spans 443 residues: Structure-specific endonuclease subunit SLX1 (443 aa).

One can recognise a GIY-YIG domain in the interval 13–93 (RVYVCYCLRS…QKPHASRHLR (81 aa)). The interval 121 to 140 (FPATRSSAPSSAASHDSGLN) is disordered. The SLX1-type zinc-finger motif lies at 361–419 (CGLCGGHINRHVPLSYTHCPHACDAVFHLTCLARYSLEQETRAHARTFCLPTSAWCPMC).

This sequence belongs to the SLX1 family. As to quaternary structure, forms a heterodimer with SLX4. Requires a divalent metal cation as cofactor.

The protein resides in the nucleus. Functionally, catalytic subunit of the SLX1-SLX4 structure-specific endonuclease that resolves DNA secondary structures generated during DNA repair and recombination. Has endonuclease activity towards branched DNA substrates, introducing single-strand cuts in duplex DNA close to junctions with ss-DNA. This is Structure-specific endonuclease subunit SLX1 from Malassezia globosa (strain ATCC MYA-4612 / CBS 7966) (Dandruff-associated fungus).